The primary structure comprises 1004 residues: MATPMVSSAGGLLAMLNEPHPVLKLHALSNLNNLVDQFWPEISTSVPIIESLYEDEEFDLHQRQLAALLVSKVFYYLGELNDSLSYALGAGPLFDVSEDSDYVHTLLAKAIDEYASLRSKAVESNEMVDIDPRLEAIVERMLGKCISDGKYQQAMGIAIECRRLDKLEEAIIKSDNVQGTLSYCINVSHSFVNRREYRHEVLSLLVKVYQKLPSPDYLSICQCLMFLDEPQGVASILEKLLRSENKDDALLALQIAFDLVENEHQAFLLSVRDRLPAPKTRAVEATQAVETTIAPNENPSGDVQMADETPAQTIVHETDPVDATYAERLTKIKGILSGETSIQLTLQFLYSHNKSDLLILKTIKQSVEMRNSVCHSATIYANAIMHAGTTVDTFLRENLDWLSRATNWAKFSATAGLGVIHRGHLQQGRSLMAPYLPQGGAGGGGSPYSEGGALYALGLIHANHGEGIKQFLRDSLRSTNVEVIQHGACLGLGLSALGTADEEIYDDVKSVLYTDSAVAGEAAGISMGLLLVGTATEKASEMLAYAHETQHEKIIRGLALGIALTVYGREEGADTLIEQMTRDQDPIIRYGGMYALALAYSGTANNKAIRQLLHFAVSDVSDDVRRTAVLALGFVLYSDPEQTPRIVSLLSESYNPHVRYGAALAVGISCAGTGLSEAISLLEPLTSDVVDFVRQGALIAMAMVMVQISEASDSRVGVFRRQLEKIILDKHEDTMSKMGAILASGILDAGGRNVTIRLLSKTKHDKVTAVIGLAVFSQFWYWYPLIYFISLAFSPTAFIGLNYDLKVPKFEFMSHAKPSLFEYPKPTTVPTANTAVKLPTAVLSTSVKAKARAKKEAEQKAIAEKTSGPEKPVNESGSGKGKASTEKEGDSMQVDSPAAVEKKAPEPEPAFEILVNPARVVPAQEKYIKLLDDSRYVPVKLAPSGFVLLKDLREHEPEVLSLTDAPTSTASPATGTAAAAQGTPASAMAVDDEPQPPQAFEYAS.

Alanine 2 is modified (N-acetylalanine). A Glycyl lysine isopeptide (Lys-Gly) (interchain with G-Cter in ubiquitin) cross-link involves residue lysine 166. PC repeat units follow at residues 412-447 (SATAGLGVIHRGHLQQGRSLMAPYLPQGGAGGGGSP), 452-485 (GALYALGLIHANHGEGIKQFLRDSLRSTNVEVIQ), 487-521 (GACLGLGLSALGTADEEIYDDVKSVLYTDSAVAGE), 522-555 (AAGISMGLLLVGTATEKASEMLAYAHETQHEKII), 557-590 (GLALGIALTVYGREEGADTLIEQMTRDQDPIIRY), 591-626 (GGMYALALAYSGTANNKAIRQLLHFAVSDVSDDVRR), 627-659 (TAVLALGFVLYSDPEQTPRIVSLLSESYNPHVR), 661-695 (GAALAVGISCAGTGLSEAISLLEPLTSDVVDFVRQ), 696-736 (GALI…DTMS), and 739-771 (GAILASGILDAGGRNVTIRLLSKTKHDKVTAVI). 2 disordered regions span residues 858 to 905 (EQKA…KKAP) and 959 to 1004 (VLSL…EYAS). Serine 896 bears the Phosphoserine mark. Residues 965-987 (APTSTASPATGTAAAAQGTPASA) are compositionally biased toward low complexity.

This sequence belongs to the proteasome subunit S1 family. Component of the 19S regulatory particle (RP/PA700) base subcomplex of the 26S proteasome. The 26S proteasome is composed of a core protease (CP), known as the 20S proteasome, capped at one or both ends by the 19S regulatory particle (RP/PA700). The RP/PA700 complex is composed of at least 17 different subunits in two subcomplexes, the base and the lid, which form the portions proximal and distal to the 20S proteolytic core, respectively. As to expression, ubiquitous with highest expression in flowers.

In terms of biological role, acts as a regulatory subunit of the 26 proteasome which is involved in the ATP-dependent degradation of ubiquitinated proteins. The sequence is that of 26S proteasome non-ATPase regulatory subunit 1 homolog A (RPN2A) from Arabidopsis thaliana (Mouse-ear cress).